The following is a 511-amino-acid chain: Probable endopeptidase p60 (511 aa).

Residues 1–27 form the signal peptide; it reads MNMKKATIVSAAGIAVTAFAAPSVVSA. In terms of domain architecture, LysM 1 spans 28–71; that stretch reads NTVVVASGDTLWGIASKTGTTVDQLKQLNKLDSDRIVPGQKLTI. One can recognise an SH3b domain in the interval 78–142; sequence KVEKSVSATW…VNGKYLSDAK (65 aa). Residues 175 to 218 enclose the LysM 2 domain; that stretch reads STYKVKSGDTIWALSVKYGVPVQKLIEWNNLSSSSIYVGQTIAV. Low complexity-rich tracts occupy residues 229–257 and 264–282; these read TVKQ…QAKP and KPAV…AKPA. The segment at 229–291 is disordered; it reads TVKQAAPAKV…AVEQKASTPA (63 aa). Residues 297–341 enclose the LysM 3 domain; it reads ATYKVQNGDSLGKIASLFKVSVADLTNWNNLNATITIYAGQELSV. 2 stretches are compositionally biased toward low complexity: residues 347–362 and 372–390; these read KPKP…SKPA and TNTT…NTSQ. The segment at 347–390 is disordered; that stretch reads KPKPAAPAKPAVSKPATSTPAKVTPTNTTNNSTPTTNVNNNTSQ. The NlpC/P60 domain maps to 393–511; the sequence is SASFSALYAE…GQYLVGFGRV (119 aa). The active-site Nucleophile is the cysteine 423. The active-site Proton acceptor is histidine 473. Residue aspartate 485 is part of the active site.

It belongs to the peptidase C40 family.

Its function is as follows. This major extracellular protein may be involved in the invasion of non-professional phagocytic cells by Listeria. The chain is Probable endopeptidase p60 (iap) from Listeria grayi (Listeria murrayi).